The chain runs to 321 residues: MKKIMITGALGQIGTELVVKCREIYGTDNVLATDIREPEADSPVQNGPFEILDVTDRDRMFELVRDFEADSLMHMAALLSATAEKNPILAWDLNMGGLMNALEATRTYNLHFFTPSSIGAFGDSTPKVNTPQVTIQQPTTMYGVNKVAGELLCQYYFKRFGVDTRSVRFPGLISHVKEPGGGTTDYAVEIYFKAVREGHYTSFIDKGTYMDMMYMDDAIEAIIKLMEADDAKLETRNGYNLSAMSFDPEMVKEAIQEYYPNFTLDYDVDPIRQGIANSWPDSIDTNCSRGEWGFDPKYDLASMTKLMLEAIEQKDTVKNNN.

Belongs to the NAD(P)-dependent epimerase/dehydratase family.

This is an uncharacterized protein from Staphylococcus aureus (strain bovine RF122 / ET3-1).